A 101-amino-acid chain; its full sequence is Urease subunit beta (101 aa).

The protein belongs to the urease beta subunit family. In terms of assembly, heterotrimer of UreA (gamma), UreB (beta) and UreC (alpha) subunits. Three heterotrimers associate to form the active enzyme.

The protein localises to the cytoplasm. The catalysed reaction is urea + 2 H2O + H(+) = hydrogencarbonate + 2 NH4(+). It participates in nitrogen metabolism; urea degradation; CO(2) and NH(3) from urea (urease route): step 1/1. The sequence is that of Urease subunit beta from Cereibacter sphaeroides (strain ATCC 17025 / ATH 2.4.3) (Rhodobacter sphaeroides).